We begin with the raw amino-acid sequence, 551 residues long: Protein MTL1 (551 aa).

The signal sequence occupies residues 1 to 35; the sequence is MASCNPTRKKSSASSLSMWRTILMALTTLPLSVLS. The Extracellular portion of the chain corresponds to 36 to 361; it reads QELVPANSTT…HSGLSKKNRN (326 aa). 3 disordered regions span residues 108–143, 206–227, and 243–263; these read MQVS…IISS, PSSS…SYSS, and SSSS…SSSS. A helical transmembrane segment spans residues 362-382; sequence IIIGCVVGIGAPLILILLILI. Over 383 to 551 the chain is Cytoplasmic; it reads YMFCVQPKKT…PNNGLNITNY (169 aa). The segment at 429-513 is disordered; it reads SSDSPIGSNN…SNSNSQDYND (85 aa). Residues 430-441 are compositionally biased toward polar residues; that stretch reads SDSPIGSNNIQN. Residues 466-477 show a composition bias toward acidic residues; that stretch reads GYDDDDDDDAND. Phosphoserine occurs at positions 481 and 482. A compositionally biased stretch (low complexity) spans 498–508; the sequence is SASYSMSNSNS.

The protein belongs to the MID2 like cell wall stress sensor family.

The protein resides in the membrane. Involved in cell integrity signaling during vegetative growth at elevated temperature. Acts positively on the PKC1-MAPK pathway. Cell membrane sensor of oxidative stress in the cell integrity pathway upstream of PKC1. Required to transmit the oxidative signal to SLT2 and to restore the correct actin organization following oxidative stress. Multicopy suppressor of 1,3-beta-glucan synthase (GS) mutation. Also suppresses RGD1 null mutations. The polypeptide is Protein MTL1 (MTL1) (Saccharomyces cerevisiae (strain ATCC 204508 / S288c) (Baker's yeast)).